We begin with the raw amino-acid sequence, 294 residues long: Probable metallo-hydrolase BURPS1710b_2304 (294 aa).

7 residues coordinate a divalent metal cation: H68, H70, D72, H73, H143, D170, and H212.

Belongs to the metallo-beta-lactamase superfamily. It depends on a divalent metal cation as a cofactor.

In terms of biological role, probable hydrolase. Does not have beta-lactamase activity. The chain is Probable metallo-hydrolase BURPS1710b_2304 from Burkholderia pseudomallei (strain 1710b).